The following is a 335-amino-acid chain: Cholinephosphotransferase 1 (335 aa).

2 helical membrane-spanning segments follow: residues proline 53–alanine 73 and phenylalanine 84–alanine 108. Residue asparagine 54 coordinates CDP-choline. Mg(2+) contacts are provided by aspartate 101 and aspartate 104. Arginine 109 lines the CDP-choline pocket. 6 consecutive transmembrane segments (helical) span residues proline 116 to alanine 140, phenylalanine 151 to tyrosine 169, valine 181 to phenylalanine 197, glutamate 213 to phenylalanine 238, isoleucine 267 to glutamine 276, and glutamate 284 to histidine 313. Residue aspartate 122 participates in Mg(2+) binding. Catalysis depends on histidine 123, which acts as the Proton acceptor. A Mg(2+)-binding site is contributed by aspartate 126.

This sequence belongs to the CDP-alcohol phosphatidyltransferase class-I family. Mg(2+) serves as cofactor. Mn(2+) is required as a cofactor.

It is found in the golgi apparatus membrane. It carries out the reaction CDP-choline + a 1,2-diacyl-sn-glycerol = a 1,2-diacyl-sn-glycero-3-phosphocholine + CMP + H(+). It catalyses the reaction 1-octadecanoyl-2-(5Z,8Z,11Z,14Z-eicosatetraenoyl)-sn-glycerol + CDP-choline = 1-octadecanoyl-2-(5Z,8Z,11Z,14Z-eicosatetraenoyl)-sn-glycero-3-phosphocholine + CMP + H(+). The catalysed reaction is 1-hexadecanoyl-2-(9Z-octadecenoyl)-sn-glycerol + CDP-choline = 1-hexadecanoyl-2-(9Z-octadecenoyl)-sn-glycero-3-phosphocholine + CMP + H(+). The enzyme catalyses 1-hexadecanoyl-2-(4Z,7Z,10Z,13Z,16Z,19Z-docosahexaenoyl)-sn-glycerol + CDP-choline = 1-hexadecanoyl-2-(4Z,7Z,10Z,13Z,16Z,19Z-docosahexaenoyl)-sn-glycero-3-phosphocholine + CMP + H(+). It carries out the reaction 1,2-dioctanoyl-sn-glycerol + CDP-choline = 1,2-dioctanoyl-sn-glycero-3-phosphocholine + CMP + H(+). The protein operates within phospholipid metabolism; phosphatidylcholine biosynthesis; phosphatidylcholine from phosphocholine: step 2/2. Catalyzes the final step of de novo phosphatidylcholine (PC) synthesis, i.e. the transfer of choline phosphate from CDP-choline to the free hydroxyl of a diacylglycerol (DAG), producing a PC. It thereby plays a central role in the formation and maintenance of vesicular membranes. This is Cholinephosphotransferase 1 (CHPT1) from Gallus gallus (Chicken).